A 91-amino-acid polypeptide reads, in one-letter code: UPF0147 protein APE_2336a (91 aa).

The protein belongs to the UPF0147 family.

The protein is UPF0147 protein APE_2336a of Aeropyrum pernix (strain ATCC 700893 / DSM 11879 / JCM 9820 / NBRC 100138 / K1).